The following is a 118-amino-acid chain: Sarafotoxin-i1 (118 aa).

An N-terminal signal peptide occupies residues 1 to 23 (MALLPRLAAGGLLLLLALAALDG). The propeptide occupies 24–84 (KPAPPKLLQK…LSPLRKPQPL (61 aa)). 2 cysteine pairs are disulfide-bonded: cysteine 85-cysteine 99 and cysteine 87-cysteine 95. A propeptide spanning residues 112–118 (PSPIQSS) is cleaved from the precursor.

The protein belongs to the endothelin/sarafotoxin family. In terms of processing, different length molecules ranging from 15 (85-99) to 30 amino acids (85-114) have been found in the venom. In terms of tissue distribution, expressed by the venom gland.

Its subcellular location is the secreted. Vasoconstrictor activity. These toxins cause cardiac arrest probably as a result of coronary vasospasm. Its function is as follows. Sarafotoxin-i3: vasoconstrictor activity. Causes cardiac arrest probably as a result of coronary vasospasm. Displays low agonistic activities towards endothelin-2 receptor (EDNRB) (displays affinity in the micromolar range). In Atractaspis irregularis (Variable burrowing asp), this protein is Sarafotoxin-i1.